The following is a 578-amino-acid chain: Hyaluronan synthase 1 (578 aa).

Topologically, residues 1–25 (MRQQDAPKPTPAACRCSGLARRVLT) are cytoplasmic. Residues 26-46 (IAFALLILGLMTWAYAAGVPL) form a helical membrane-spanning segment. Topologically, residues 47 to 52 (ASDRYG) are extracellular. Residues 53-73 (LLAFGLYGAFLSAHLVAQSLF) traverse the membrane as a helical segment. The Cytoplasmic portion of the chain corresponds to 74–399 (AYLEHRRVAA…NALWWHRHHA (326 aa)). Residues 400–420 (WMTYEAVVSGLFPFFVAATVL) traverse the membrane as a helical segment. At 421–430 (RLFYAGRPWA) the chain is on the extracellular side. The chain crosses the membrane as a helical span at residues 431–451 (LLWVLLCVQGVALAKAAFAAW). Over 452 to 457 (LRGCLR) the chain is Cytoplasmic. Residues 458–478 (MVLLSLYAPLYMCGLLPAKFL) form a helical membrane-spanning segment. The Extracellular segment spans residues 479–497 (ALVTMNQSGWGTSGRRKLA). Residues 498 to 518 (ANYVPLLPLALWALLLLGGLV) form a helical membrane-spanning segment. The Cytoplasmic segment spans residues 519-540 (RSVAHEARADWSGPSRAAEAYH). A helical transmembrane segment spans residues 541–561 (LAAGAGAYVGYWVAMLTLYWV). Residues 562-578 (GVRRLCRRRTGGYRVQV) lie on the Extracellular side of the membrane.

It belongs to the NodC/HAS family. Requires Mg(2+) as cofactor. Widely expressed. Highly expressed in ovary followed by spleen, thymus, prostate, testes and large intestine. Weakly expressed in small intestine.

The protein resides in the membrane. It carries out the reaction [hyaluronan](n) + UDP-N-acetyl-alpha-D-glucosamine = N-acetyl-beta-D-glucosaminyl-(1-&gt;4)-[hyaluronan](n) + UDP + H(+). It catalyses the reaction N-acetyl-beta-D-glucosaminyl-(1-&gt;4)-[hyaluronan](n) + UDP-alpha-D-glucuronate = [hyaluronan](n+1) + UDP + H(+). Its pathway is glycan biosynthesis; hyaluronan biosynthesis. In terms of biological role, catalyzes the addition of GlcNAc or GlcUA monosaccharides to the nascent hyaluronan polymer. Therefore, it is essential to hyaluronan synthesis a major component of most extracellular matrices that has a structural role in tissues architectures and regulates cell adhesion, migration and differentiation. This is one of the isozymes catalyzing that reaction. Also able to catalyze the synthesis of chito-oligosaccharide depending on the substrate. This chain is Hyaluronan synthase 1 (HAS1), found in Homo sapiens (Human).